The chain runs to 294 residues: ATP synthase gamma chain (294 aa).

Belongs to the ATPase gamma chain family. F-type ATPases have 2 components, CF(1) - the catalytic core - and CF(0) - the membrane proton channel. CF(1) has five subunits: alpha(3), beta(3), gamma(1), delta(1), epsilon(1). CF(0) has three main subunits: a, b and c.

It localises to the cell inner membrane. Functionally, produces ATP from ADP in the presence of a proton gradient across the membrane. The gamma chain is believed to be important in regulating ATPase activity and the flow of protons through the CF(0) complex. This chain is ATP synthase gamma chain, found in Campylobacter jejuni subsp. doylei (strain ATCC BAA-1458 / RM4099 / 269.97).